Reading from the N-terminus, the 32-residue chain is Cyclotide Hyfl-C (32 aa).

The segment at residues 1–32 is a cross-link (cyclopeptide (Gly-Asn)); that stretch reads GSPRQCAETCFIGKCYTEELGCTCTAFLCMKN. 3 cysteine pairs are disulfide-bonded: Cys-6/Cys-22, Cys-10/Cys-24, and Cys-15/Cys-29.

It belongs to the cyclotide family. Moebius subfamily. Post-translationally, this is a cyclic peptide.

Functionally, probably participates in a plant defense mechanism. The polypeptide is Cyclotide Hyfl-C (Hybanthus floribundus (Greenviolet)).